Consider the following 143-residue polypeptide: Submaxillary gland androgen-regulated protein 2, isoform gamma (143 aa).

Residues 1–22 (MKALYMVFVLWVLIGCFLSSEC) form the signal peptide. Positions 28 to 50 (GQHDPTRPLSPSNPSSHFYPQPD) are disordered. Residues 36 to 45 (LSPSNPSSHF) are compositionally biased toward polar residues.

It localises to the secreted. Functionally, may play a role in protection or detoxification. This chain is Submaxillary gland androgen-regulated protein 2, isoform gamma (Smr2), found in Mus musculus (Mouse).